The sequence spans 214 residues: ATP-dependent Clp protease proteolytic subunit (214 aa).

Ser114 functions as the Nucleophile in the catalytic mechanism. His139 is an active-site residue.

It belongs to the peptidase S14 family. As to quaternary structure, fourteen ClpP subunits assemble into 2 heptameric rings which stack back to back to give a disk-like structure with a central cavity, resembling the structure of eukaryotic proteasomes.

The protein resides in the cytoplasm. It catalyses the reaction Hydrolysis of proteins to small peptides in the presence of ATP and magnesium. alpha-casein is the usual test substrate. In the absence of ATP, only oligopeptides shorter than five residues are hydrolyzed (such as succinyl-Leu-Tyr-|-NHMec, and Leu-Tyr-Leu-|-Tyr-Trp, in which cleavage of the -Tyr-|-Leu- and -Tyr-|-Trp bonds also occurs).. Its function is as follows. Cleaves peptides in various proteins in a process that requires ATP hydrolysis. Has a chymotrypsin-like activity. Plays a major role in the degradation of misfolded proteins. This Nitrosomonas europaea (strain ATCC 19718 / CIP 103999 / KCTC 2705 / NBRC 14298) protein is ATP-dependent Clp protease proteolytic subunit.